The following is a 487-amino-acid chain: UDP-N-acetylmuramoyl-L-alanyl-D-glutamate--2,6-diaminopimelate ligase (487 aa).

UDP-N-acetyl-alpha-D-muramoyl-L-alanyl-D-glutamate is bound at residue Ser30. 109 to 115 lines the ATP pocket; the sequence is GTNGKTS. UDP-N-acetyl-alpha-D-muramoyl-L-alanyl-D-glutamate-binding positions include 151 to 152, Ser178, and Arg186; that span reads TT. Lys218 is modified (N6-carboxylysine). Meso-2,6-diaminopimelate is bound by residues Arg379, 403–406, Gly455, and Glu459; that span reads DNPR. The Meso-diaminopimelate recognition motif motif lies at 403–406; it reads DNPR.

Belongs to the MurCDEF family. MurE subfamily. Mg(2+) is required as a cofactor. Post-translationally, carboxylation is probably crucial for Mg(2+) binding and, consequently, for the gamma-phosphate positioning of ATP.

It is found in the cytoplasm. It catalyses the reaction UDP-N-acetyl-alpha-D-muramoyl-L-alanyl-D-glutamate + meso-2,6-diaminopimelate + ATP = UDP-N-acetyl-alpha-D-muramoyl-L-alanyl-gamma-D-glutamyl-meso-2,6-diaminopimelate + ADP + phosphate + H(+). It functions in the pathway cell wall biogenesis; peptidoglycan biosynthesis. Functionally, catalyzes the addition of meso-diaminopimelic acid to the nucleotide precursor UDP-N-acetylmuramoyl-L-alanyl-D-glutamate (UMAG) in the biosynthesis of bacterial cell-wall peptidoglycan. The protein is UDP-N-acetylmuramoyl-L-alanyl-D-glutamate--2,6-diaminopimelate ligase of Alkaliphilus oremlandii (strain OhILAs) (Clostridium oremlandii (strain OhILAs)).